The primary structure comprises 482 residues: Guanine nucleotide exchange factor SRM1 (482 aa).

The segment covering 1–11 has biased composition (polar residues); the sequence is MVKRTVATNGD. Positions 1–22 are disordered; the sequence is MVKRTVATNGDASGAHRAKKMS. The short motif at 15–26 is the Nuclear localization signal element; that stretch reads AHRAKKMSKTHA. RCC1 repeat units lie at residues 45 to 101, 103 to 152, 183 to 238, 239 to 291, 292 to 347, 349 to 411, and 412 to 466; these read PLDI…ALDE, SNVW…TPAK, NGEV…FLDE, EGMV…ALTK, DNKL…ILSQ, GDLY…AVAQ, and NGIA…SGGV. Residues 128–158 are disordered; it reads KDMDADDSSDDEDGDLNELESTPAKIPRESF. Over residues 131–145 the composition is skewed to acidic residues; the sequence is DADDSSDDEDGDLNE. Ser135 and Ser136 each carry phosphoserine.

Component of a multicomponent complex composed of six to seven proteins, which has a collective molecular mass greater than 150 kDa. Interacts with GSP1 and YRB2. Phosphorylated; possibly by KSP1.

It is found in the nucleus. Guanine nucleotide exchange factor that promotes the exchange of GSP1/GSP2-bound GDP by GTP and controls RNA metabolism and transport. Involved in yeast pheromone response pathway and in mRNA metabolism. Involved in nuclear pore complex (NPC) assembly and required for mRNA and ribosome nuclear export. Binds chromatin and is involved NPC-mediated transcriptional control. In Saccharomyces cerevisiae (strain ATCC 204508 / S288c) (Baker's yeast), this protein is Guanine nucleotide exchange factor SRM1 (SRM1).